A 554-amino-acid polypeptide reads, in one-letter code: Glutamine--tRNA ligase (554 aa).

Positions 34–44 (PEPNGYLHIGH) match the 'HIGH' region motif. ATP contacts are provided by residues 35 to 37 (EPN) and 41 to 47 (HIGHAKS). The L-glutamine site is built by Asp67 and Tyr212. Residues Thr231, 261–262 (RL), and 269–271 (MSK) each bind ATP. Positions 268–272 (VMSKR) match the 'KMSKS' region motif.

This sequence belongs to the class-I aminoacyl-tRNA synthetase family. In terms of assembly, monomer.

The protein resides in the cytoplasm. The catalysed reaction is tRNA(Gln) + L-glutamine + ATP = L-glutaminyl-tRNA(Gln) + AMP + diphosphate. The polypeptide is Glutamine--tRNA ligase (Shigella boydii serotype 4 (strain Sb227)).